The following is a 139-amino-acid chain: ATP synthase epsilon chain (139 aa).

Belongs to the ATPase epsilon chain family. In terms of assembly, F-type ATPases have 2 components, CF(1) - the catalytic core - and CF(0) - the membrane proton channel. CF(1) has five subunits: alpha(3), beta(3), gamma(1), delta(1), epsilon(1). CF(0) has three main subunits: a, b and c.

It is found in the cell inner membrane. In terms of biological role, produces ATP from ADP in the presence of a proton gradient across the membrane. In Escherichia coli O139:H28 (strain E24377A / ETEC), this protein is ATP synthase epsilon chain.